We begin with the raw amino-acid sequence, 141 residues long: ATP synthase epsilon chain (141 aa).

It belongs to the ATPase epsilon chain family. F-type ATPases have 2 components, CF(1) - the catalytic core - and CF(0) - the membrane proton channel. CF(1) has five subunits: alpha(3), beta(3), gamma(1), delta(1), epsilon(1). CF(0) has three main subunits: a, b and c.

It localises to the cell inner membrane. In terms of biological role, produces ATP from ADP in the presence of a proton gradient across the membrane. The polypeptide is ATP synthase epsilon chain (Paraburkholderia phymatum (strain DSM 17167 / CIP 108236 / LMG 21445 / STM815) (Burkholderia phymatum)).